The primary structure comprises 81 residues: ATP synthase subunit c (81 aa).

2 helical membrane-spanning segments follow: residues 7–27 (LVAI…AIGF) and 55–75 (IAGL…FFIF).

This sequence belongs to the ATPase C chain family. As to quaternary structure, F-type ATPases have 2 components, F(1) - the catalytic core - and F(0) - the membrane proton channel. F(1) has five subunits: alpha(3), beta(3), gamma(1), delta(1), epsilon(1). F(0) has three main subunits: a(1), b(2) and c(10-14). The alpha and beta chains form an alternating ring which encloses part of the gamma chain. F(1) is attached to F(0) by a central stalk formed by the gamma and epsilon chains, while a peripheral stalk is formed by the delta and b chains.

It localises to the cell inner membrane. In terms of biological role, f(1)F(0) ATP synthase produces ATP from ADP in the presence of a proton or sodium gradient. F-type ATPases consist of two structural domains, F(1) containing the extramembraneous catalytic core and F(0) containing the membrane proton channel, linked together by a central stalk and a peripheral stalk. During catalysis, ATP synthesis in the catalytic domain of F(1) is coupled via a rotary mechanism of the central stalk subunits to proton translocation. Its function is as follows. Key component of the F(0) channel; it plays a direct role in translocation across the membrane. A homomeric c-ring of between 10-14 subunits forms the central stalk rotor element with the F(1) delta and epsilon subunits. In Acinetobacter baumannii (strain ACICU), this protein is ATP synthase subunit c.